Reading from the N-terminus, the 657-residue chain is 1-deoxy-D-xylulose-5-phosphate synthase (657 aa).

His-73 provides a ligand contact to thiamine diphosphate. The tract at residues 91–110 (RQEGGMSGYPDRGESEHDIV) is disordered. Residues 101–110 (DRGESEHDIV) are compositionally biased toward basic and acidic residues. 113 to 115 (SHA) serves as a coordination point for thiamine diphosphate. Mg(2+) is bound at residue Asp-145. Thiamine diphosphate-binding positions include 146 to 147 (GA), Asn-175, Tyr-293, and Glu-375. Asn-175 lines the Mg(2+) pocket.

The protein belongs to the transketolase family. DXPS subfamily. As to quaternary structure, homodimer. Requires Mg(2+) as cofactor. Thiamine diphosphate serves as cofactor.

The catalysed reaction is D-glyceraldehyde 3-phosphate + pyruvate + H(+) = 1-deoxy-D-xylulose 5-phosphate + CO2. Its pathway is metabolic intermediate biosynthesis; 1-deoxy-D-xylulose 5-phosphate biosynthesis; 1-deoxy-D-xylulose 5-phosphate from D-glyceraldehyde 3-phosphate and pyruvate: step 1/1. Functionally, catalyzes the acyloin condensation reaction between C atoms 2 and 3 of pyruvate and glyceraldehyde 3-phosphate to yield 1-deoxy-D-xylulose-5-phosphate (DXP). The polypeptide is 1-deoxy-D-xylulose-5-phosphate synthase (Arthrobacter sp. (strain FB24)).